The primary structure comprises 191 residues: Large ribosomal subunit protein uL5 (191 aa).

This sequence belongs to the universal ribosomal protein uL5 family. Part of the 50S ribosomal subunit; part of the 5S rRNA/L5/L18/L25 subcomplex. Contacts the 5S rRNA and the P site tRNA. Forms a bridge to the 30S subunit in the 70S ribosome.

Its function is as follows. This is one of the proteins that bind and probably mediate the attachment of the 5S RNA into the large ribosomal subunit, where it forms part of the central protuberance. In the 70S ribosome it contacts protein S13 of the 30S subunit (bridge B1b), connecting the 2 subunits; this bridge is implicated in subunit movement. Contacts the P site tRNA; the 5S rRNA and some of its associated proteins might help stabilize positioning of ribosome-bound tRNAs. This chain is Large ribosomal subunit protein uL5, found in Corynebacterium glutamicum (strain R).